Reading from the N-terminus, the 461-residue chain is Cysteine--tRNA ligase (461 aa).

Residue Cys28 participates in Zn(2+) binding. The short motif at 30-40 (ITVYDLCHIGH) is the 'HIGH' region element. Zn(2+) contacts are provided by Cys209, His234, and Glu238. Positions 266 to 270 (KMSKS) match the 'KMSKS' region motif. ATP is bound at residue Lys269.

Belongs to the class-I aminoacyl-tRNA synthetase family. In terms of assembly, monomer. Zn(2+) serves as cofactor.

It is found in the cytoplasm. The catalysed reaction is tRNA(Cys) + L-cysteine + ATP = L-cysteinyl-tRNA(Cys) + AMP + diphosphate. This is Cysteine--tRNA ligase from Escherichia coli O157:H7.